A 159-amino-acid polypeptide reads, in one-letter code: Large ribosomal subunit protein uL22 (159 aa).

The protein belongs to the universal ribosomal protein uL22 family. In terms of assembly, part of the 50S ribosomal subunit.

Functionally, this protein binds specifically to 23S rRNA. It makes multiple contacts with different domains of the 23S rRNA in the assembled 50S subunit and ribosome. In terms of biological role, the globular domain of the protein is located near the polypeptide exit tunnel on the outside of the subunit, while an extended beta-hairpin is found that lines the wall of the exit tunnel in the center of the 70S ribosome. The protein is Large ribosomal subunit protein uL22 of Ignicoccus hospitalis (strain KIN4/I / DSM 18386 / JCM 14125).